We begin with the raw amino-acid sequence, 390 residues long: Bifunctional enzyme IspD/IspF (390 aa).

The segment at Met-1–Ile-229 is 2-C-methyl-D-erythritol 4-phosphate cytidylyltransferase. A 2-C-methyl-D-erythritol 2,4-cyclodiphosphate synthase region spans residues Arg-230 to Glu-390. Asp-236 and His-238 together coordinate a divalent metal cation. Residues Asp-236 to His-238 and His-262 to Ser-263 each bind 4-CDP-2-C-methyl-D-erythritol 2-phosphate. His-270 provides a ligand contact to a divalent metal cation. 4-CDP-2-C-methyl-D-erythritol 2-phosphate is bound by residues Asp-284–Gly-286, Thr-360–Glu-363, Phe-367, and Arg-370.

In the N-terminal section; belongs to the IspD/TarI cytidylyltransferase family. IspD subfamily. This sequence in the C-terminal section; belongs to the IspF family. Requires a divalent metal cation as cofactor.

It carries out the reaction 2-C-methyl-D-erythritol 4-phosphate + CTP + H(+) = 4-CDP-2-C-methyl-D-erythritol + diphosphate. The enzyme catalyses 4-CDP-2-C-methyl-D-erythritol 2-phosphate = 2-C-methyl-D-erythritol 2,4-cyclic diphosphate + CMP. The protein operates within isoprenoid biosynthesis; isopentenyl diphosphate biosynthesis via DXP pathway; isopentenyl diphosphate from 1-deoxy-D-xylulose 5-phosphate: step 2/6. It functions in the pathway isoprenoid biosynthesis; isopentenyl diphosphate biosynthesis via DXP pathway; isopentenyl diphosphate from 1-deoxy-D-xylulose 5-phosphate: step 4/6. Its function is as follows. Bifunctional enzyme that catalyzes the formation of 4-diphosphocytidyl-2-C-methyl-D-erythritol from CTP and 2-C-methyl-D-erythritol 4-phosphate (MEP) (IspD), and catalyzes the conversion of 4-diphosphocytidyl-2-C-methyl-D-erythritol 2-phosphate (CDP-ME2P) to 2-C-methyl-D-erythritol 2,4-cyclodiphosphate (ME-CPP) with a corresponding release of cytidine 5-monophosphate (CMP) (IspF). This Brucella abortus biovar 1 (strain 9-941) protein is Bifunctional enzyme IspD/IspF.